The sequence spans 111 residues: Large ribosomal subunit protein uL24 (111 aa).

Belongs to the universal ribosomal protein uL24 family. As to quaternary structure, part of the 50S ribosomal subunit.

Functionally, one of two assembly initiator proteins, it binds directly to the 5'-end of the 23S rRNA, where it nucleates assembly of the 50S subunit. Its function is as follows. One of the proteins that surrounds the polypeptide exit tunnel on the outside of the subunit. In Heliobacterium modesticaldum (strain ATCC 51547 / Ice1), this protein is Large ribosomal subunit protein uL24.